The following is a 218-amino-acid chain: Probable signal peptidase I-2 (218 aa).

The Cytoplasmic segment spans residues 1 to 26 (MTENIVRETSKKKESPPENTWLELGK). A helical membrane pass occupies residues 27-43 (TMVTAVILAIGIRTFVA). Topologically, residues 44 to 218 (EARYIPSSSM…ISPQTVPESR (175 aa)) are periplasmic. Active-site residues include Ser52 and Lys100.

Belongs to the peptidase S26 family.

It is found in the cell membrane. It catalyses the reaction Cleavage of hydrophobic, N-terminal signal or leader sequences from secreted and periplasmic proteins.. The sequence is that of Probable signal peptidase I-2 (lepB2) from Synechocystis sp. (strain ATCC 27184 / PCC 6803 / Kazusa).